The following is an 80-amino-acid chain: uncharacterized protein (80 aa).

This is an uncharacterized protein from Synechococcus sp. (strain PCC 6716).